We begin with the raw amino-acid sequence, 193 residues long: UMP-CMP kinase (193 aa).

Position 13–18 (13–18 (GAGKGT)) interacts with ATP. The tract at residues 33-63 (SAGDLLRDERKKPDSQYGELIESYIRDGKIV) is NMP. A ribonucleoside 5'-phosphate-binding positions include arginine 39, 61-63 (KIV), and 93-96 (GFPR). Asparagine 100 contacts CMP. The segment at 133–143 (ERGKSSGRSDD) is LID. Arginine 134 contributes to the ATP binding site. A ribonucleoside 5'-phosphate is bound by residues arginine 140 and arginine 151. Lysine 179 contacts ATP.

This sequence belongs to the adenylate kinase family. UMP-CMP kinase subfamily. Monomer. Mg(2+) is required as a cofactor.

The protein localises to the nucleus. Its subcellular location is the cytoplasm. The enzyme catalyses CMP + ATP = CDP + ADP. It catalyses the reaction dCMP + ATP = dCDP + ADP. The catalysed reaction is UMP + ATP = UDP + ADP. It carries out the reaction a 2'-deoxyribonucleoside 5'-diphosphate + ATP = a 2'-deoxyribonucleoside 5'-triphosphate + ADP. The enzyme catalyses a ribonucleoside 5'-diphosphate + ATP = a ribonucleoside 5'-triphosphate + ADP. Functionally, catalyzes the phosphorylation of pyrimidine nucleoside monophosphates at the expense of ATP. Plays an important role in de novo pyrimidine nucleotide biosynthesis. Has preference for UMP and CMP as phosphate acceptors. Also displays broad nucleoside diphosphate kinase activity. In Xenopus laevis (African clawed frog), this protein is UMP-CMP kinase (cmpk1).